A 131-amino-acid chain; its full sequence is Profilin-1 (131 aa).

This sequence belongs to the profilin family. As to quaternary structure, occurs in many kinds of cells as a complex with monomeric actin in a 1:1 ratio. As to expression, cytoplasmic distribution in hypocotyls. In root nodules, it is found in all cells, but is more abundant in the vascular tissue as well as the endodermis.

The protein localises to the cytoplasm. Its subcellular location is the cytoskeleton. In terms of biological role, binds to actin and affects the structure of the cytoskeleton. At high concentrations, profilin prevents the polymerization of actin, whereas it enhances it at low concentrations. By binding to PIP2, it inhibits the formation of IP3 and DG. The sequence is that of Profilin-1 from Phaseolus vulgaris (Kidney bean).